A 356-amino-acid polypeptide reads, in one-letter code: Heparan sulfate 2-O-sulfotransferase 1 (356 aa).

Topologically, residues 1 to 11 (MGLLRIMMPPK) are cytoplasmic. The helical; Signal-anchor for type II membrane protein transmembrane segment at 12 to 28 (LQLLAVVAFAVAMLFLE) threads the bilayer. Positions 24 to 51 (MLFLENQIQKLEESRSKLERAIARHEVR) form a coiled coil. Residues 29-356 (NQIQKLEESR…FYEKIYPKSN (328 aa)) lie on the Lumenal side of the membrane. K83, T84, A85, S86, T87, and S88 together coordinate adenosine 3',5'-bisphosphate. N-linked (GlcNAc...) asparagine glycosylation is found at N108 and N127. Residues H140 and H142 contribute to the active site. The adenosine 3',5'-bisphosphate site is built by R164 and S172. Intrachain disulfides connect C201-C209 and C222-C228. Residues Y279, S285, T290, and K293 each coordinate adenosine 3',5'-bisphosphate.

Belongs to the sulfotransferase 3 family. Homotrimer. Interacts with the C5-epimerase GLCE. N-glycosylated.

It localises to the golgi apparatus membrane. In terms of biological role, catalyzes the transfer of a sulfo group from 3'-phospho-5'-adenylyl sulfate (PAPS) to the 2-OH position of iduronic acid (IdoA) or glucuronic acid (GlcA) within the heparan sulfate (HS) chain and participates in HS biosynthesis. Required for metanephric development of kidney formation, suggesting that 2-O-sulfation within HS is essential for signaling between ureteric bud and metanephric mesenchyme. This chain is Heparan sulfate 2-O-sulfotransferase 1, found in Pongo abelii (Sumatran orangutan).